The sequence spans 57 residues: Conotoxin Cal6.34 (57 aa).

The first 22 residues, 1-22 (MKLTCVLIVAVLILTACQVIAA), serve as a signal peptide directing secretion. Intrachain disulfides connect C26–C37, C29–C43, and C36–C54.

It belongs to the conotoxin O1 superfamily. As to expression, expressed by the venom duct.

The protein resides in the secreted. Probable neurotoxin. The protein is Conotoxin Cal6.34 of Californiconus californicus (California cone).